A 468-amino-acid chain; its full sequence is Glutamine synthetase (468 aa).

One can recognise a GS beta-grasp domain in the interval 11–96 (HDVKWIDLRF…LVCDIIEPST (86 aa)). In terms of domain architecture, GS catalytic spans 104 to 468 (PRAIAHRAEE…PLEYELYYSC (365 aa)). The Mg(2+) site is built by E129 and E131. E207 lines the ATP pocket. 2 residues coordinate Mg(2+): E212 and E220. L-glutamate-binding positions include 264–265 (NG) and G265. H269 is a Mg(2+) binding site. Residues 271-273 (HMS) and S273 each bind ATP. L-glutamate-binding residues include R321, E327, and R339. ATP-binding residues include R339, R344, and R352. E357 serves as a coordination point for Mg(2+). L-glutamate is bound at residue R359. Y397 bears the O-AMP-tyrosine mark.

This sequence belongs to the glutamine synthetase family. As to quaternary structure, oligomer of 12 subunits arranged in the form of two hexagons. Requires Mg(2+) as cofactor. Mn(2+) serves as cofactor.

It carries out the reaction L-glutamate + NH4(+) + ATP = L-glutamine + ADP + phosphate + H(+). With respect to regulation, when cellular nitrogen levels are high, the C-terminal adenylyl transferase (AT) of GlnE inhibits GlnA by covalent transfer of an adenylyl group from ATP to Tyr-397. Conversely, when nitrogen levels are low, the N-terminal adenylyl removase (AR) of GlnE activates GlnA by removing the adenylyl group by phosphorolysis. The fully adenylated enzyme complex is inactive. In terms of biological role, catalyzes the formation of glutamine from glutamate and ammonia. In vitro, can also use hydroxylamine, methylamine and ethylamine, with 32%, 7% and 1% activity compared to ammonia, respectively. This chain is Glutamine synthetase, found in Pseudomonas taetrolens.